The primary structure comprises 199 residues: NAD(P)H dehydrogenase (quinone) (199 aa).

The Flavodoxin-like domain maps to valine 4–isoleucine 190. Residues serine 10–isoleucine 15 and threonine 78–phenylalanine 80 each bind FMN. Tyrosine 12 contributes to the NAD(+) binding site. Tryptophan 98 provides a ligand contact to substrate. Residues serine 113–glycine 119 and histidine 134 each bind FMN.

Belongs to the WrbA family. FMN serves as cofactor.

The catalysed reaction is a quinone + NADH + H(+) = a quinol + NAD(+). It catalyses the reaction a quinone + NADPH + H(+) = a quinol + NADP(+). The sequence is that of NAD(P)H dehydrogenase (quinone) from Rhodopseudomonas palustris (strain BisB18).